We begin with the raw amino-acid sequence, 261 residues long: Oxidoreductase ptaF (261 aa).

This sequence belongs to the avfA family.

It participates in secondary metabolite biosynthesis. In terms of biological role, oxidoreductase; part of the gene cluster that mediates the biosynthesis of pestheic acid, a diphenyl ether which is a biosynthetic precursor of the unique chloropupukeananes. The biosynthesis initiates from condensation of acetate and malonate units catalyzed by the non-reducing PKS ptaA. As the ptaA protein is TE/CLC domain-deficient, hydrolysis and Claisen cyclization of the polyketide could be catalyzed by ptaB containing a beta-lactamase domain. The ptaB protein might hydrolyze the thioester bond between the ACP of ptaA and the intermediate to release atrochrysone carboxylic acid, which is spontaneously dehydrated to form endocrocin anthrone. Endocrocin anthrone is then converted to endocrocin, catalyzed by the anthrone oxygenase ptaC. Spontaneous decarboxylation of endocrocin occurs to generate emodin. An O-methyltransferase (ptaH or ptaI) could methylate emodin to form physcion. PtaJ could then catalyze the oxidative cleavage of physcion, and rotation of the intermediate could then afford desmethylisosulochrin. PtaF, a putative NADH-dependent oxidoreductase, might also participate in the oxidative cleavage step. Desmethylisosulochrin is then transformed by another O-methyltransferase (ptaH or ptaI) to form isosulochrin. Chlorination of isosulochrin by ptaM in the cyclohexadienone B ring then produces chloroisosulochrin. PtaE is responsible for the oxidative coupling reactions of both benzophenones isosulouchrin and chloroisosulochrin to RES-1214-1 and pestheic acid respectively, regardless of chlorination. The chain is Oxidoreductase ptaF from Pestalotiopsis fici (strain W106-1 / CGMCC3.15140).